A 343-amino-acid chain; its full sequence is uncharacterized protein (343 aa).

Position 33–40 (33–40) interacts with ATP; the sequence is GPKSSGKS.

Belongs to the archaeal ATPase family.

This is an uncharacterized protein from Methanocaldococcus jannaschii (strain ATCC 43067 / DSM 2661 / JAL-1 / JCM 10045 / NBRC 100440) (Methanococcus jannaschii).